The sequence spans 299 residues: UDP-N-acetylenolpyruvoylglucosamine reductase (299 aa).

Positions 28–193 (IGGPVDLMVL…VSALMQLHKE (166 aa)) constitute an FAD-binding PCMH-type domain. Arginine 172 is an active-site residue. Serine 222 (proton donor) is an active-site residue. The active site involves glutamate 292.

Belongs to the MurB family. FAD serves as cofactor.

It is found in the cytoplasm. It catalyses the reaction UDP-N-acetyl-alpha-D-muramate + NADP(+) = UDP-N-acetyl-3-O-(1-carboxyvinyl)-alpha-D-glucosamine + NADPH + H(+). It functions in the pathway cell wall biogenesis; peptidoglycan biosynthesis. Cell wall formation. The polypeptide is UDP-N-acetylenolpyruvoylglucosamine reductase (Syntrophomonas wolfei subsp. wolfei (strain DSM 2245B / Goettingen)).